Here is a 543-residue protein sequence, read N- to C-terminus: MFS-type transporter pyvG (543 aa).

A disordered region spans residues 24–71 (PPTEQQPGFQLPPPYRLAATRTQPQQQQEQEQEQEQAKPATRPPWNEP). N94 carries N-linked (GlcNAc...) asparagine glycosylation. 12 helical membrane passes run 101–121 (LLVY…VAIF), 141–161 (LGMS…SPLS), 178–198 (IFLL…FLIL), 203–223 (GFFG…VTGL), 230–250 (LYVW…IAGF), 259–279 (WSMW…LFLP), 335–355 (PAIL…YSYF), 374–394 (GLIF…YFAF), 415–435 (LVPA…FAWT), 440–460 (LHWV…SLVI), 476–496 (ASLF…AIMW), and 512–532 (LLAG…WWGP).

The protein belongs to the major facilitator superfamily. CAR1 family.

The protein resides in the cell membrane. Its function is as follows. MFS-type transporter; part of the gene cluster that mediates the biosynthesis of pyranoviolin A, a pyranonigrin analog with a C-3 methoxy group. May be involved in the secretion of pyranoviolin A. This chain is MFS-type transporter pyvG, found in Aspergillus violaceofuscus (strain CBS 115571).